Consider the following 417-residue polypeptide: Type II methyltransferase M.Eco47II (417 aa).

Residues 81-414 (YTVLELFAGA…KSVVHLLDKI (334 aa)) form the SAM-dependent MTase C5-type domain. C153 is an active-site residue.

It belongs to the class I-like SAM-binding methyltransferase superfamily. C5-methyltransferase family.

It catalyses the reaction a 2'-deoxycytidine in DNA + S-adenosyl-L-methionine = a 5-methyl-2'-deoxycytidine in DNA + S-adenosyl-L-homocysteine + H(+). Functionally, a methylase that recognizes the double-stranded sequence 5'-GGNCC-3', methylates C-? on both strands, and protects the DNA from cleavage by both the Eco47I and Eco47II endonucleases. The sequence is that of Type II methyltransferase M.Eco47II from Escherichia coli.